Here is a 154-residue protein sequence, read N- to C-terminus: 6,7-dimethyl-8-ribityllumazine synthase (154 aa).

5-amino-6-(D-ribitylamino)uracil-binding positions include phenylalanine 22, 56 to 58 (AFE), and 80 to 82 (TVI). (2S)-2-hydroxy-3-oxobutyl phosphate is bound at residue 85–86 (ST). Histidine 88 functions as the Proton donor in the catalytic mechanism. Phenylalanine 113 provides a ligand contact to 5-amino-6-(D-ribitylamino)uracil. Arginine 127 lines the (2S)-2-hydroxy-3-oxobutyl phosphate pocket.

This sequence belongs to the DMRL synthase family.

It catalyses the reaction (2S)-2-hydroxy-3-oxobutyl phosphate + 5-amino-6-(D-ribitylamino)uracil = 6,7-dimethyl-8-(1-D-ribityl)lumazine + phosphate + 2 H2O + H(+). It functions in the pathway cofactor biosynthesis; riboflavin biosynthesis; riboflavin from 2-hydroxy-3-oxobutyl phosphate and 5-amino-6-(D-ribitylamino)uracil: step 1/2. Functionally, catalyzes the formation of 6,7-dimethyl-8-ribityllumazine by condensation of 5-amino-6-(D-ribitylamino)uracil with 3,4-dihydroxy-2-butanone 4-phosphate. This is the penultimate step in the biosynthesis of riboflavin. The sequence is that of 6,7-dimethyl-8-ribityllumazine synthase from Lactococcus lactis subsp. lactis (strain IL1403) (Streptococcus lactis).